Here is a 623-residue protein sequence, read N- to C-terminus: Negative regulator of PDR1-mediated fluconazole resistance JJJ1 (623 aa).

Residues 4-70 (CYYDLLEVRS…QERAWYDSHK (67 aa)) enclose the J domain. The C2H2-type zinc-finger motif lies at 363–387 (YDCFICKKSFKSEKQLENHIKTKLH). Disordered stretches follow at residues 448–476 (QSSVTDSEDFTDDNNDTEDQNSLVDKLSN), 499–581 (GADN…NDAK), and 599–623 (SHIQTEGHVSPLSKVKKGKRSKKNK). A compositionally biased stretch (acidic residues) spans 453-466 (DSEDFTDDNNDTED). Residues 499 to 508 (GADNSETQNA) are compositionally biased toward polar residues. Residues 525-538 (ELTRILRELEESKT) show a composition bias toward basic and acidic residues. Basic residues-rich tracts occupy residues 553–564 (KKKTKAKKKKNK) and 612–623 (KVKKGKRSKKNK).

It localises to the nucleus. In terms of biological role, acts as a negative regulator of fluconazole resistance, primarily through down-regulation of the ABC transporter gene CDR1 via inactivation of the PDR1 transcriptional pathway. This is Negative regulator of PDR1-mediated fluconazole resistance JJJ1 from Candida glabrata (strain ATCC 2001 / BCRC 20586 / JCM 3761 / NBRC 0622 / NRRL Y-65 / CBS 138) (Yeast).